The sequence spans 471 residues: Serine hydroxymethyltransferase, cytosolic (471 aa).

Lysine 249 carries the N6-(pyridoxal phosphate)lysine modification.

It belongs to the SHMT family. Requires pyridoxal 5'-phosphate as cofactor.

The protein localises to the cytoplasm. The protein resides in the cytosol. It catalyses the reaction (6R)-5,10-methylene-5,6,7,8-tetrahydrofolate + glycine + H2O = (6S)-5,6,7,8-tetrahydrofolate + L-serine. The protein operates within one-carbon metabolism; tetrahydrofolate interconversion. Its function is as follows. Catalyzes the interconversion of serine and glycine. Essential for viability and required for virulence in a murine model of established pulmonary infection. The polypeptide is Serine hydroxymethyltransferase, cytosolic (Aspergillus fumigatus (strain ATCC MYA-4609 / CBS 101355 / FGSC A1100 / Af293) (Neosartorya fumigata)).